We begin with the raw amino-acid sequence, 473 residues long: 3-isopropylmalate dehydratase large subunit (473 aa).

[4Fe-4S] cluster-binding residues include Cys-348, Cys-408, and Cys-411. Residues 421–440 (GDEASASSSNRNFIGRQGSK) are disordered.

It belongs to the aconitase/IPM isomerase family. LeuC type 1 subfamily. In terms of assembly, heterodimer of LeuC and LeuD. The cofactor is [4Fe-4S] cluster.

The catalysed reaction is (2R,3S)-3-isopropylmalate = (2S)-2-isopropylmalate. It functions in the pathway amino-acid biosynthesis; L-leucine biosynthesis; L-leucine from 3-methyl-2-oxobutanoate: step 2/4. In terms of biological role, catalyzes the isomerization between 2-isopropylmalate and 3-isopropylmalate, via the formation of 2-isopropylmaleate. The sequence is that of 3-isopropylmalate dehydratase large subunit from Haloferax volcanii (strain ATCC 29605 / DSM 3757 / JCM 8879 / NBRC 14742 / NCIMB 2012 / VKM B-1768 / DS2) (Halobacterium volcanii).